We begin with the raw amino-acid sequence, 203 residues long: Thymidylate kinase (203 aa).

10-17 (GIDGAGKS) is an ATP binding site.

The protein belongs to the thymidylate kinase family.

The enzyme catalyses dTMP + ATP = dTDP + ADP. In terms of biological role, phosphorylation of dTMP to form dTDP in both de novo and salvage pathways of dTTP synthesis. The chain is Thymidylate kinase from Cupriavidus necator (strain ATCC 17699 / DSM 428 / KCTC 22496 / NCIMB 10442 / H16 / Stanier 337) (Ralstonia eutropha).